Reading from the N-terminus, the 318-residue chain is Pyrimidine-specific ribonucleoside hydrolase RihA (318 aa).

Residue histidine 240 is part of the active site.

The protein belongs to the IUNH family. RihA subfamily.

Functionally, hydrolyzes cytidine or uridine to ribose and cytosine or uracil, respectively. This Shewanella sp. (strain MR-7) protein is Pyrimidine-specific ribonucleoside hydrolase RihA.